Consider the following 431-residue polypeptide: Glutamate-1-semialdehyde 2,1-aminomutase (431 aa).

Lysine 269 bears the N6-(pyridoxal phosphate)lysine mark.

Belongs to the class-III pyridoxal-phosphate-dependent aminotransferase family. HemL subfamily. In terms of assembly, homodimer. Pyridoxal 5'-phosphate serves as cofactor.

The protein localises to the cytoplasm. The catalysed reaction is (S)-4-amino-5-oxopentanoate = 5-aminolevulinate. It functions in the pathway porphyrin-containing compound metabolism; protoporphyrin-IX biosynthesis; 5-aminolevulinate from L-glutamyl-tRNA(Glu): step 2/2. Its pathway is porphyrin-containing compound metabolism; chlorophyll biosynthesis. In Chlorobium phaeobacteroides (strain BS1), this protein is Glutamate-1-semialdehyde 2,1-aminomutase.